The primary structure comprises 130 residues: Large ribosomal subunit protein uL14 (130 aa).

It belongs to the universal ribosomal protein uL14 family. As to quaternary structure, part of the 50S ribosomal subunit. Forms a cluster with proteins L3 and L19. In the 70S ribosome, L14 and L19 interact and together make contacts with the 16S rRNA in bridges B5 and B8.

Functionally, binds to 23S rRNA. Forms part of two intersubunit bridges in the 70S ribosome. The protein is Large ribosomal subunit protein uL14 of Leptospira biflexa serovar Patoc (strain Patoc 1 / Ames).